We begin with the raw amino-acid sequence, 87 residues long: MPNPHYRSTSYRKIHTKLPSGKSTIHYERRKNNRAVCAICKKPLQGVKTNLLYKYSKTEKRPERMYGGYICYKCLENLIKQTLRGSS.

It belongs to the eukaryotic ribosomal protein eL34 family.

In Sulfurisphaera tokodaii (strain DSM 16993 / JCM 10545 / NBRC 100140 / 7) (Sulfolobus tokodaii), this protein is Large ribosomal subunit protein eL34.